Consider the following 280-residue polypeptide: Tryptophan 2,3-dioxygenase (280 aa).

Residues 47–51, Tyr-109, and Arg-113 contribute to the substrate site; that span reads FVVQH. Residue His-236 coordinates heme. Thr-250 is a substrate binding site.

The protein belongs to the tryptophan 2,3-dioxygenase family. As to quaternary structure, homotetramer. Heme serves as cofactor.

It catalyses the reaction L-tryptophan + O2 = N-formyl-L-kynurenine. It participates in amino-acid degradation; L-tryptophan degradation via kynurenine pathway; L-kynurenine from L-tryptophan: step 1/2. In terms of biological role, heme-dependent dioxygenase that catalyzes the oxidative cleavage of the L-tryptophan (L-Trp) pyrrole ring and converts L-tryptophan to N-formyl-L-kynurenine. Catalyzes the oxidative cleavage of the indole moiety. The polypeptide is Tryptophan 2,3-dioxygenase (Serratia proteamaculans (strain 568)).